We begin with the raw amino-acid sequence, 380 residues long: Cytochrome b (380 aa).

4 consecutive transmembrane segments (helical) span residues 28–48, 72–93, 109–129, and 174–194; these read IGSL…FLSL, WLVR…YAHI, WLVG…GYVL, and FYSF…VHLL. Positions 78 and 92 each coordinate heme b. The heme b site is built by His-178 and His-192. His-197 contributes to the a ubiquinone binding site. The next 4 helical transmembrane spans lie at 222-243, 285-305, 317-337, and 344-364; these read WKIL…CYIT, IGGV…PLAL, IGQL…WLGA, and YISL…LYMI.

This sequence belongs to the cytochrome b family. The main subunits of complex b-c1 are: cytochrome b, cytochrome c1 and the Rieske protein. Heme b serves as cofactor.

The protein resides in the mitochondrion inner membrane. Functionally, component of the ubiquinol-cytochrome c reductase complex (complex III or cytochrome b-c1 complex) that is part of the mitochondrial respiratory chain. The b-c1 complex mediates electron transfer from ubiquinol to cytochrome c. Contributes to the generation of a proton gradient across the mitochondrial membrane that is then used for ATP synthesis. This Cepaea nemoralis (Banded wood snail) protein is Cytochrome b (MT-CYB).